A 1331-amino-acid polypeptide reads, in one-letter code: DNA replication ATP-dependent helicase/nuclease JHS1 (1331 aa).

Positions Met1–Ser98 are disordered. Positions Pro2–Lys8 match the Nuclear localization signal motif. Positions Ala11–Ile31 are enriched in polar residues. The segment covering Gln40–Thr52 has biased composition (low complexity). Residues Asp57–Asn81 are compositionally biased toward polar residues. Positions Glu82–Asp91 are enriched in basic and acidic residues. The interval Glu362–Ile811 is nuclease activity. Cys422, Cys666, Cys669, and Cys675 together coordinate [4Fe-4S] cluster. The helicase activity stretch occupies residues Leu812–Pro1331. Positions Asn924–Ser1271 constitute a UvrD-like helicase ATP-binding domain. Gly945 to Thr952 serves as a coordination point for ATP.

Belongs to the DNA2/NAM7 helicase family. [4Fe-4S] cluster serves as cofactor. In terms of tissue distribution, strongly expressed in meristems, including both root and shoot apical meristems (RAM and SAM). Also present in the vasculature and in young floral tissues.

It is found in the nucleus. The protein resides in the chromosome. The enzyme catalyses ATP + H2O = ADP + phosphate + H(+). Essential protein required during embryogenesis. Key enzyme involved in DNA replication and damage repair, shoot apical meristem (SAM) maintenance, and development. Involved in Okazaki fragments processing. Possesses different enzymatic activities, such as single-stranded DNA (ssDNA)-dependent ATPase, 5'-3' helicase and endonuclease activities. While the ATPase and endonuclease activities are well-defined and play a key role in Okazaki fragments processing and DSB repair, the 5'-3' DNA helicase activity is atypical: it cannot load onto its tracking strand internally and has an absolute free 5'-end requirement. This Arabidopsis thaliana (Mouse-ear cress) protein is DNA replication ATP-dependent helicase/nuclease JHS1.